We begin with the raw amino-acid sequence, 588 residues long: Sulfite reductase [NADPH] hemoprotein beta-component (588 aa).

The [4Fe-4S] cluster site is built by Cys442, Cys448, Cys487, and Cys491. Residue Cys491 participates in siroheme binding.

It belongs to the nitrite and sulfite reductase 4Fe-4S domain family. As to quaternary structure, alpha(8)-beta(8). The alpha component is a flavoprotein, the beta component is a hemoprotein. Siroheme is required as a cofactor. It depends on [4Fe-4S] cluster as a cofactor.

It carries out the reaction hydrogen sulfide + 3 NADP(+) + 3 H2O = sulfite + 3 NADPH + 4 H(+). Its pathway is sulfur metabolism; hydrogen sulfide biosynthesis; hydrogen sulfide from sulfite (NADPH route): step 1/1. Its function is as follows. Component of the sulfite reductase complex that catalyzes the 6-electron reduction of sulfite to sulfide. This is one of several activities required for the biosynthesis of L-cysteine from sulfate. In Actinobacillus pleuropneumoniae serotype 5b (strain L20), this protein is Sulfite reductase [NADPH] hemoprotein beta-component.